The sequence spans 156 residues: ATP synthase subunit b (156 aa).

A helical transmembrane segment spans residues 7–27 (LFVQAIVFAILVWFTMKFVWP).

This sequence belongs to the ATPase B chain family. F-type ATPases have 2 components, F(1) - the catalytic core - and F(0) - the membrane proton channel. F(1) has five subunits: alpha(3), beta(3), gamma(1), delta(1), epsilon(1). F(0) has three main subunits: a(1), b(2) and c(10-14). The alpha and beta chains form an alternating ring which encloses part of the gamma chain. F(1) is attached to F(0) by a central stalk formed by the gamma and epsilon chains, while a peripheral stalk is formed by the delta and b chains.

The protein localises to the cell inner membrane. Functionally, f(1)F(0) ATP synthase produces ATP from ADP in the presence of a proton or sodium gradient. F-type ATPases consist of two structural domains, F(1) containing the extramembraneous catalytic core and F(0) containing the membrane proton channel, linked together by a central stalk and a peripheral stalk. During catalysis, ATP synthesis in the catalytic domain of F(1) is coupled via a rotary mechanism of the central stalk subunits to proton translocation. Component of the F(0) channel, it forms part of the peripheral stalk, linking F(1) to F(0). In Polaromonas sp. (strain JS666 / ATCC BAA-500), this protein is ATP synthase subunit b.